Here is a 1064-residue protein sequence, read N- to C-terminus: Lysine-specific demethylase 4A (1064 aa).

The residue at position 2 (A2) is an N-acetylalanine. Positions 14–56 (IMTFYPTMEEFRNFSRYIAYIESQGAHRAGLAKVVPPKEWKPR) constitute a JmjN domain. Y132 provides a ligand contact to 2-oxoglutarate. The region spanning 142–308 (EKHVDEWNIG…YGKQAVLCSC (167 aa)) is the JmjC domain. Fe cation-binding residues include H188 and E190. Positions 198 and 206 each coordinate 2-oxoglutarate. Zn(2+) contacts are provided by C234 and H240. Position 241 (K241) interacts with 2-oxoglutarate. H276 lines the Fe cation pocket. Zn(2+) is bound by residues C306 and C308. 3 disordered regions span residues 358-384 (ELPP…EEGD), 501-537 (FSGS…RAQG), and 616-642 (SDDE…PLSQ). Acidic residues predominate over residues 366-382 (EEECPEDDMEGVEDGEE). Over residues 509 to 532 (SSSLGSGSSRDSVSSDSETSEPLS) the composition is skewed to low complexity. Residue S523 is modified to Phosphoserine. Positions 597-638 (RQPLSKLPRHHPLVLQECVSDDETSEQLTPEEEAEETEAWAK) are interaction with NCOR1. The span at 616 to 634 (SDDETSEQLTPEEEAEETE) shows a compositional bias: acidic residues. A PHD-type 1 zinc finger spans residues 709–767 (MCFTSTGCGTDINLSTPYLEEDGTSILVSCKKCSVRVHASCYGVPPAKASEDWMCSRCS). The segment at 772 to 805 (EEDCCLCSLRGGALQRANDDRWVHVSCAVAILEA) adopts a C2HC pre-PHD-type zinc-finger fold. A PHD-type 2 zinc finger spans residues 828–885 (LKCIFCKKRRKRTAGCCVQCSHGRCPTAFHVSCAQAAGVMMQPDDWPFVVFITCFRHK). Tudor domains follow at residues 897–954 (QSIT…CLQF) and 955–1011 (GPPA…EELP).

The protein belongs to the JHDM3 histone demethylase family. In terms of assembly, interacts with histone deacetylase proteins HDAC1, HDAC2 and HDAC3. Interacts with RB and NCOR1. Interacts with VRK1. The cofactor is Fe(2+). Ubiquitinated by RNF8 and RNF168, leading to its degradation. Degradation promotes accessibility of H4K20me2 mark for DNA repair protein TP53BP1, which is then recruited. Also ubiquitinated by the SCF(FBXO22) complex; leading to proteasomal degradation.

The protein localises to the nucleus. The catalysed reaction is N(6),N(6),N(6)-trimethyl-L-lysyl(9)-[histone H3] + 2 2-oxoglutarate + 2 O2 = N(6)-methyl-L-lysyl(9)-[histone H3] + 2 formaldehyde + 2 succinate + 2 CO2. It catalyses the reaction N(6),N(6),N(6)-trimethyl-L-lysyl(36)-[histone H3] + 2 2-oxoglutarate + 2 O2 = N(6)-methyl-L-lysyl(36)-[histone H3] + 2 formaldehyde + 2 succinate + 2 CO2. Its function is as follows. Histone demethylase that specifically demethylates 'Lys-9' and 'Lys-36' residues of histone H3, thereby playing a central role in histone code. Does not demethylate histone H3 'Lys-4', H3 'Lys-27' nor H4 'Lys-20'. Demethylates trimethylated H3 'Lys-9' and H3 'Lys-36' residue, while it has no activity on mono- and dimethylated residues. Demethylation of Lys residue generates formaldehyde and succinate. Participates in transcriptional repression of ASCL2 and E2F-responsive promoters via the recruitment of histone deacetylases and NCOR1, respectively. In Pongo abelii (Sumatran orangutan), this protein is Lysine-specific demethylase 4A (KDM4A).